The chain runs to 446 residues: 5-hydroxytryptamine receptor (446 aa).

The Extracellular portion of the chain corresponds to 1–65; sequence MEGAEGQEEL…AALVRAAAKA (65 aa). N-linked (GlcNAc...) asparagine glycosylation is found at N23, N27, N36, and N42. A helical membrane pass occupies residues 66 to 88; the sequence is VVLGLLILATVVGNVFVIAAILL. Residues 89–98 lie on the Cytoplasmic side of the membrane; it reads ERHLRSAANN. The helical transmembrane segment at 99-120 threads the bilayer; sequence LILSLAVADLLVACLVMPLGAV. Topologically, residues 121-135 are extracellular; sequence YEVVQRWTLGPELCD. A disulfide bridge links C134 with C214. A helical transmembrane segment spans residues 136–157; the sequence is MWTSGDVLCCTASILHLVAIAL. Topologically, residues 158 to 176 are cytoplasmic; that stretch reads DRYWAVTNIDYIHASTAKR. A helical membrane pass occupies residues 177–199; the sequence is VGMMIACVWTVSFFVCIAQLLGW. Residues 200-227 are Extracellular-facing; it reads KDPDWNQRVSEDLRCVVSQDVGYQIFAT. The chain crosses the membrane as a helical span at residues 228–249; sequence ASSFYVPVLIILILYWRIYQTA. The Cytoplasmic segment spans residues 250 to 367; it reads RKRIRRRRGA…SKRERKAAKT (118 aa). The span at 304 to 324 shows a compositional bias: polar residues; that stretch reads TTTGFTNVSSNNTSPEKQSCA. Residues 304-329 form a disordered region; sequence TTTGFTNVSSNNTSPEKQSCANGLEA. A helical membrane pass occupies residues 368 to 391; that stretch reads LAIITGAFVACWLPFFVLAILVPT. The Extracellular portion of the chain corresponds to 392 to 399; sequence CDCEVSPV. A helical transmembrane segment spans residues 400 to 422; sequence LTSLSLWLGYFNSTLNPVIYTVF. At 423 to 446 the chain is on the cytoplasmic side; sequence SPEFRHAFQRLLCGRRVRRRRAPQ.

It belongs to the G-protein coupled receptor 1 family.

The protein resides in the cell membrane. In terms of biological role, this is a receptor for 5-hydroxytryptamine (serotonin), a biogenic hormone that function as a neurotransmitter, a hormone, and a mitogen. This is 5-hydroxytryptamine receptor from Bombyx mori (Silk moth).